Here is a 475-residue protein sequence, read N- to C-terminus: Sulfate adenylyltransferase subunit 1 (475 aa).

Residues 25–241 (KSLLRFLTCG…LENIEIQRVV (217 aa)) enclose the tr-type G domain. A G1 region spans residues 34–41 (GSVDDGKS). 34 to 41 (GSVDDGKS) is a GTP binding site. The tract at residues 92–96 (GITID) is G2. Residues 113-116 (DTPG) are G3. Residues 113-117 (DTPGH) and 168-171 (NKMD) each bind GTP. Positions 168 to 171 (NKMD) are G4. Residues 206–208 (SAL) form a G5 region.

The protein belongs to the TRAFAC class translation factor GTPase superfamily. Classic translation factor GTPase family. CysN/NodQ subfamily. Heterodimer composed of CysD, the smaller subunit, and CysN.

The enzyme catalyses sulfate + ATP + H(+) = adenosine 5'-phosphosulfate + diphosphate. It participates in sulfur metabolism; hydrogen sulfide biosynthesis; sulfite from sulfate: step 1/3. Its function is as follows. With CysD forms the ATP sulfurylase (ATPS) that catalyzes the adenylation of sulfate producing adenosine 5'-phosphosulfate (APS) and diphosphate, the first enzymatic step in sulfur assimilation pathway. APS synthesis involves the formation of a high-energy phosphoric-sulfuric acid anhydride bond driven by GTP hydrolysis by CysN coupled to ATP hydrolysis by CysD. The protein is Sulfate adenylyltransferase subunit 1 of Cronobacter sakazakii (strain ATCC BAA-894) (Enterobacter sakazakii).